Here is a 178-residue protein sequence, read N- to C-terminus: CASP-like protein 2A2 (178 aa).

The Cytoplasmic segment spans residues 1–22 (MDKTDQTAIDESALVLNRTEKS). A helical transmembrane segment spans residues 23–43 (AEAVLRVASMALSITGLVIMI). The Extracellular portion of the chain corresponds to 44 to 69 (KNSISNEFGSVSYSNIGAFMYLVSAN). A helical transmembrane segment spans residues 70–90 (GVCAAYSLLSALAILALPCPI). At 91-96 (SKVQVR) the chain is on the cytoplasmic side. A helical transmembrane segment spans residues 97 to 117 (TLFLLDQVVTYVVLAAGAVSA). Topologically, residues 118–145 (ETVYLAYYGNIPITWSSACDSYGSFCHN) are extracellular. Residues 146-166 (ALISVVFTFVVSLLYMLLSLI) form a helical membrane-spanning segment. The Cytoplasmic portion of the chain corresponds to 167-178 (SSYRLFTRFEAP).

This sequence belongs to the Casparian strip membrane proteins (CASP) family. Homodimer and heterodimers. In terms of tissue distribution, mostly expressed in flowers and buds and, to a lower extent, in roots and yellow siliques. Localized in the floral organ abscission zone.

Its subcellular location is the cell membrane. Its function is as follows. Involved in floral organ shedding. The protein is CASP-like protein 2A2 of Arabidopsis thaliana (Mouse-ear cress).